Reading from the N-terminus, the 92-residue chain is Small ribosomal subunit protein uS19 (92 aa).

The protein belongs to the universal ribosomal protein uS19 family.

In terms of biological role, protein S19 forms a complex with S13 that binds strongly to the 16S ribosomal RNA. This Bifidobacterium longum subsp. infantis (strain ATCC 15697 / DSM 20088 / JCM 1222 / NCTC 11817 / S12) protein is Small ribosomal subunit protein uS19.